A 144-amino-acid chain; its full sequence is Large ribosomal subunit protein uL16 (144 aa).

The protein belongs to the universal ribosomal protein uL16 family. As to quaternary structure, part of the 50S ribosomal subunit.

Binds 23S rRNA and is also seen to make contacts with the A and possibly P site tRNAs. The protein is Large ribosomal subunit protein uL16 of Bacillus licheniformis (strain ATCC 14580 / DSM 13 / JCM 2505 / CCUG 7422 / NBRC 12200 / NCIMB 9375 / NCTC 10341 / NRRL NRS-1264 / Gibson 46).